We begin with the raw amino-acid sequence, 110 residues long: UPF0145 protein Blon_0093/BLIJ_0092 (110 aa).

It belongs to the UPF0145 family.

The polypeptide is UPF0145 protein Blon_0093/BLIJ_0092 (Bifidobacterium longum subsp. infantis (strain ATCC 15697 / DSM 20088 / JCM 1222 / NCTC 11817 / S12)).